Reading from the N-terminus, the 363-residue chain is Chorismate synthase (363 aa).

The disordered stretch occupies residues 36-58 (SESDIQGDLDRRRPGQSKITTPR). R47 serves as a coordination point for NADP(+). FMN is bound by residues 124-126 (RSS), G286, 301-305 (KPTAT), and R327.

Belongs to the chorismate synthase family. In terms of assembly, homotetramer. FMNH2 is required as a cofactor.

The catalysed reaction is 5-O-(1-carboxyvinyl)-3-phosphoshikimate = chorismate + phosphate. Its pathway is metabolic intermediate biosynthesis; chorismate biosynthesis; chorismate from D-erythrose 4-phosphate and phosphoenolpyruvate: step 7/7. Catalyzes the anti-1,4-elimination of the C-3 phosphate and the C-6 proR hydrogen from 5-enolpyruvylshikimate-3-phosphate (EPSP) to yield chorismate, which is the branch point compound that serves as the starting substrate for the three terminal pathways of aromatic amino acid biosynthesis. This reaction introduces a second double bond into the aromatic ring system. This chain is Chorismate synthase, found in Crocosphaera subtropica (strain ATCC 51142 / BH68) (Cyanothece sp. (strain ATCC 51142)).